Here is a 974-residue protein sequence, read N- to C-terminus: Localization factor PodJL (974 aa).

3 coiled-coil regions span residues 81–163, 218–320, and 375–469; these read DEVG…EAAG, VARL…SAQA, and QAQA…LEAA. 2 disordered regions span residues 460-497 and 589-611; these read SEAQ…SPFE and AAAR…KKEK. Residues 589–598 show a composition bias toward low complexity; the sequence is AAARAAAASE. The helical transmembrane segment at 642 to 662 threads the bilayer; sequence ALVVFAAAGALGAGVGGLLLL. Sel1-like repeat units follow at residues 757–793, 794–829, and 830–865; these read PAAQ…NGGD, PRAM…DMGL, and VDSQ…RAGD.

Two isoforms exist, the full-length translation product PodJL and a C-terminal truncated form PodJS. Both appear during a specific time period of the cell cycle to control different aspects of polar organelle development.

The protein resides in the membrane. In terms of biological role, podJL provides the positional information for the localization of several polar organelles (pili, adhesive holdfast and chemotactic apparatus) by recruiting structural (CpaE) and regulatory (PleC) proteins to a specific cell pole. The polypeptide is Localization factor PodJL (podJ) (Caulobacter vibrioides (strain ATCC 19089 / CIP 103742 / CB 15) (Caulobacter crescentus)).